The chain runs to 229 residues: Small ribosomal subunit protein uS3 (229 aa).

The KH type-2 domain occupies 39–107 (IRKFLKKELY…EVFINIKEEK (69 aa)).

Belongs to the universal ribosomal protein uS3 family. In terms of assembly, part of the 30S ribosomal subunit. Forms a tight complex with proteins S10 and S14.

Its function is as follows. Binds the lower part of the 30S subunit head. Binds mRNA in the 70S ribosome, positioning it for translation. This Nitratiruptor sp. (strain SB155-2) protein is Small ribosomal subunit protein uS3.